We begin with the raw amino-acid sequence, 108 residues long: uncharacterized protein (108 aa).

This is an uncharacterized protein from Acanthamoeba polyphaga mimivirus (APMV).